The sequence spans 289 residues: Porin (289 aa).

As to quaternary structure, homotrimer.

It localises to the cell outer membrane. Functionally, forms channels that allow the passive diffusion of small hydrophilic solutes up to an exclusion limit of about 0.6 kDa. This chain is Porin (opmA), found in Fuscovulum blasticum (Rhodobacter blasticus).